The chain runs to 242 residues: Probable transcriptional regulatory protein EF_0663 (242 aa).

Residues 1–14 (MSGHSKWSNIQGRK) are compositionally biased toward polar residues. Residues 1-22 (MSGHSKWSNIQGRKNAQDAKRG) form a disordered region.

The protein belongs to the TACO1 family.

The protein resides in the cytoplasm. This is Probable transcriptional regulatory protein EF_0663 from Enterococcus faecalis (strain ATCC 700802 / V583).